The primary structure comprises 783 residues: BMP/retinoic acid-inducible neural-specific protein 2 (783 aa).

The first 33 residues, 1–33 (MRWQCGTRFRGLRPVVAPWTALLALGLPGWVLA), serve as a signal peptide directing secretion. The 197-residue stretch at 85-281 (RYRIYREFAR…FVAAALSYIT (197 aa)) folds into the MACPF domain. 6 N-linked (GlcNAc...) asparagine glycosylation sites follow: Asn-185, Asn-354, Asn-473, Asn-579, Asn-626, and Asn-658.

This sequence belongs to the BRINP family.

It is found in the secreted. Inhibits neuronal cell proliferation by negative regulation of the cell cycle transition. This chain is BMP/retinoic acid-inducible neural-specific protein 2 (BRINP2), found in Pongo abelii (Sumatran orangutan).